We begin with the raw amino-acid sequence, 503 residues long: Aspartyl/glutamyl-tRNA(Asn/Gln) amidotransferase subunit B (503 aa).

It belongs to the GatB/GatE family. GatB subfamily. Heterotrimer of A, B and C subunits.

It carries out the reaction L-glutamyl-tRNA(Gln) + L-glutamine + ATP + H2O = L-glutaminyl-tRNA(Gln) + L-glutamate + ADP + phosphate + H(+). It catalyses the reaction L-aspartyl-tRNA(Asn) + L-glutamine + ATP + H2O = L-asparaginyl-tRNA(Asn) + L-glutamate + ADP + phosphate + 2 H(+). Allows the formation of correctly charged Asn-tRNA(Asn) or Gln-tRNA(Gln) through the transamidation of misacylated Asp-tRNA(Asn) or Glu-tRNA(Gln) in organisms which lack either or both of asparaginyl-tRNA or glutaminyl-tRNA synthetases. The reaction takes place in the presence of glutamine and ATP through an activated phospho-Asp-tRNA(Asn) or phospho-Glu-tRNA(Gln). This is Aspartyl/glutamyl-tRNA(Asn/Gln) amidotransferase subunit B from Jannaschia sp. (strain CCS1).